An 826-amino-acid polypeptide reads, in one-letter code: Putative ankyrin repeat protein RBE_0220 (826 aa).

8 ANK repeats span residues 308-337 (LGTS…DQHA), 342-371 (IDMS…DPNY), 375-404 (DNDT…DPNK), 445-474 (NDFT…DVNA), 478-507 (DGFT…NPDV), 512-541 (TKSS…NPNL), 545-574 (DGTT…DINK), and 578-607 (NGDN…DLKK).

In Rickettsia bellii (strain RML369-C), this protein is Putative ankyrin repeat protein RBE_0220.